A 1106-amino-acid chain; its full sequence is Probable NAD-specific glutamate dehydrogenase (1106 aa).

Residue K654 is part of the active site.

Belongs to the Glu/Leu/Phe/Val dehydrogenases family. In terms of assembly, homotetramer.

Its subcellular location is the cytoplasm. The enzyme catalyses L-glutamate + NAD(+) + H2O = 2-oxoglutarate + NH4(+) + NADH + H(+). Functionally, NAD(+)-dependent glutamate dehydrogenase which degrades glutamate to ammonia and alpha-ketoglutarate. This chain is Probable NAD-specific glutamate dehydrogenase (gdh2), found in Schizosaccharomyces pombe (strain 972 / ATCC 24843) (Fission yeast).